We begin with the raw amino-acid sequence, 300 residues long: ATP-dependent (S)-NAD(P)H-hydrate dehydratase (300 aa).

Positions 6–297 constitute a YjeF C-terminal domain; the sequence is YAGKIKEFIP…GCIHQSFTSL (292 aa). (6S)-NADPHX is bound by residues glycine 106 and 158–164; that span reads NEVEFKR. ATP is bound by residues 188-192 and 218-227; these read KGSTD and GSNRRCGGQG. Aspartate 228 contributes to the (6S)-NADPHX binding site.

The protein belongs to the NnrD/CARKD family. It depends on Mg(2+) as a cofactor.

It carries out the reaction (6S)-NADHX + ATP = ADP + phosphate + NADH + H(+). The enzyme catalyses (6S)-NADPHX + ATP = ADP + phosphate + NADPH + H(+). Functionally, catalyzes the dehydration of the S-form of NAD(P)HX at the expense of ATP, which is converted to ADP. Together with NAD(P)HX epimerase, which catalyzes the epimerization of the S- and R-forms, the enzyme allows the repair of both epimers of NAD(P)HX, a damaged form of NAD(P)H that is a result of enzymatic or heat-dependent hydration. In Pediculus humanus subsp. corporis (Body louse), this protein is ATP-dependent (S)-NAD(P)H-hydrate dehydratase.